A 326-amino-acid polypeptide reads, in one-letter code: DNA polymerase III subunit delta' (326 aa).

In terms of assembly, DNA polymerase III contains a core (composed of alpha, epsilon and theta chains) that associates with a tau subunit. This core dimerizes to form the POLIII' complex. PolIII' associates with the gamma complex (composed of gamma, delta, delta', psi and chi chains) and with the beta chain to form the complete DNA polymerase III complex.

It carries out the reaction DNA(n) + a 2'-deoxyribonucleoside 5'-triphosphate = DNA(n+1) + diphosphate. Functionally, DNA polymerase III is a complex, multichain enzyme responsible for most of the replicative synthesis in bacteria. This DNA polymerase also exhibits 3' to 5' exonuclease activity. The sequence is that of DNA polymerase III subunit delta' (holB) from Buchnera aphidicola subsp. Acyrthosiphon pisum (strain APS) (Acyrthosiphon pisum symbiotic bacterium).